Here is a 266-residue protein sequence, read N- to C-terminus: MRFNNKMLALAALLFAAQASADTLESIDNCAVGCPTGGSSNVSIVRHAYTLNNNSTTKFANWVAYHITKDTPASGKTRNWKTDPALNPADTLAPADYTGANAALKVDRGHQAPLASLAGVSDWESLNYLSNITPQKSDLNQGAWARLEDQERKLIDRADISSVYTVTGPLYERDMGKLPGTQKAHTIPSAYWKVIFINNSPAVNHYAAFLFDQNTPKGADFCQFRVTVDEIEKRTGLIIWAGLPDDVQASLKSKPGVLPELMGCKN.

A signal peptide spans 1–21 (MRFNNKMLALAALLFAAQASA). Cysteines 30 and 34 form a disulfide. His110 (proton acceptor) is an active-site residue. Position 140 (Asn140) interacts with Mg(2+). The cysteines at positions 222 and 264 are disulfide-linked.

Belongs to the DNA/RNA non-specific endonuclease family. As to quaternary structure, homodimer. Requires Mg(2+) as cofactor.

The protein localises to the secreted. It catalyses the reaction Endonucleolytic cleavage to 5'-phosphomononucleotide and 5'-phosphooligonucleotide end-products.. Catalyzes the hydrolysis of both DNA and RNA, double- or single-stranded, at the 3'position of the phosphodiester bond to produce 5'-phosphorylated mono-, di-, tri- and tetranucleotides. DNA is a slightly better substrate than RNA. In Serratia marcescens, this protein is Nuclease (nucA).